We begin with the raw amino-acid sequence, 559 residues long: Subtelomeric hrmA-associated cluster protein AFUB_079030 (559 aa).

Disordered regions lie at residues 163-190 (AKHPYNGGKPPAGAPPGKKGDPEKTKPE), 298-351 (RESN…TGMA), 427-451 (SITSSSPEQTSHHRQAPLPMQHSAS), and 525-559 (FRTGFLSHPCDPSQQAPHSSGCGHPDSWTQNRPHV). A compositionally biased stretch (low complexity) spans 169–179 (GGKPPAGAPPG). 2 stretches are compositionally biased toward basic and acidic residues: residues 180-189 (KKGDPEKTKP) and 300-325 (SNQKEKDGDSNVDPDQKHEQEDDNAR). A compositionally biased stretch (polar residues) spans 336–346 (NSTSPMSNSAE).

Its function is as follows. Part of the subtelomeric hrmA-associated cluster (HAC) containing genes that alter the hyphal surface (such as reduced total chitin or increased beta-glucan exposure) and perturb inter-hyphal interactions within the developing biofilms, resulting in a loss of vertically aligned polarized growing filaments. Consequently, this hypoxia-typic morphotype (called H-MORPH) with altered biofilm architecture leads to increased hypoxia fitness, increased host inflammation, rapid disease progression, and mortality in a murine model of invasive aspergillosis. This Aspergillus fumigatus (strain CBS 144.89 / FGSC A1163 / CEA10) (Neosartorya fumigata) protein is Subtelomeric hrmA-associated cluster protein AFUB_079030.